A 205-amino-acid polypeptide reads, in one-letter code: Dephospho-CoA kinase (205 aa).

One can recognise a DPCK domain in the interval 4–203; sequence KIGITGGIGS…QKIHYLCSAK (200 aa). ATP is bound at residue 12–17; that stretch reads GSGKSV.

Belongs to the CoaE family.

The protein resides in the cytoplasm. It carries out the reaction 3'-dephospho-CoA + ATP = ADP + CoA + H(+). It participates in cofactor biosynthesis; coenzyme A biosynthesis; CoA from (R)-pantothenate: step 5/5. Functionally, catalyzes the phosphorylation of the 3'-hydroxyl group of dephosphocoenzyme A to form coenzyme A. In Bacteroides fragilis (strain ATCC 25285 / DSM 2151 / CCUG 4856 / JCM 11019 / LMG 10263 / NCTC 9343 / Onslow / VPI 2553 / EN-2), this protein is Dephospho-CoA kinase.